Consider the following 335-residue polypeptide: Dihydroorotate dehydrogenase (quinone) (335 aa).

FMN is bound by residues 59–63 (AGLDK) and Thr83. Residue Lys63 coordinates substrate. Residue 108 to 112 (NRMGF) participates in substrate binding. 2 residues coordinate FMN: Asn136 and Asn169. Asn169 contributes to the substrate binding site. Ser172 (nucleophile) is an active-site residue. Asn174 lines the substrate pocket. Residues Lys214 and Thr242 each contribute to the FMN site. 243 to 244 (NT) lines the substrate pocket. Residues Gly265, Gly294, and 315-316 (YS) each bind FMN.

The protein belongs to the dihydroorotate dehydrogenase family. Type 2 subfamily. In terms of assembly, monomer. FMN is required as a cofactor.

Its subcellular location is the cell membrane. The catalysed reaction is (S)-dihydroorotate + a quinone = orotate + a quinol. Its pathway is pyrimidine metabolism; UMP biosynthesis via de novo pathway; orotate from (S)-dihydroorotate (quinone route): step 1/1. Functionally, catalyzes the conversion of dihydroorotate to orotate with quinone as electron acceptor. The protein is Dihydroorotate dehydrogenase (quinone) of Neisseria meningitidis serogroup A / serotype 4A (strain DSM 15465 / Z2491).